We begin with the raw amino-acid sequence, 447 residues long: Phosphoglucosamine mutase (447 aa).

The active-site Phosphoserine intermediate is serine 106. Mg(2+) contacts are provided by serine 106, aspartate 245, aspartate 247, and aspartate 249. Serine 106 is subject to Phosphoserine.

It belongs to the phosphohexose mutase family. Requires Mg(2+) as cofactor. In terms of processing, activated by phosphorylation.

The enzyme catalyses alpha-D-glucosamine 1-phosphate = D-glucosamine 6-phosphate. In terms of biological role, catalyzes the conversion of glucosamine-6-phosphate to glucosamine-1-phosphate. This is Phosphoglucosamine mutase from Cupriavidus pinatubonensis (strain JMP 134 / LMG 1197) (Cupriavidus necator (strain JMP 134)).